We begin with the raw amino-acid sequence, 29 residues long: GWTLNSAGYLLGPHAIDNHRSFNDKHGLA.

Residue Ala-29 is modified to Alanine amide.

The protein belongs to the galanin family.

It is found in the secreted. Contracts smooth muscle of the gastrointestinal and genitourinary tract, regulates growth hormone release, modulates insulin release, and may be involved in the control of adrenal secretion. This chain is Galanin (gal), found in Pelophylax ridibundus (Marsh frog).